The chain runs to 763 residues: Cyclin-F (763 aa).

The Nuclear localization signal 1 motif lies at 19-27 (KRRVKRRPR). Residues 28–75 (VLTLLSLPEDVLLYVLECLPAVDILSMREVHPHLRSLVDSHSSVWARA) form the F-box domain. A Cyclin N-terminal domain is found at 299–411 (INKTSIFTTQ…EIISALEGKI (113 aa)). 2 short sequence motifs (d box) span residues 316–319 (RYIL) and 355–358 (RAKL). Disordered stretches follow at residues 574-600 (GSKTKRRREDSIQEDRGSFVTTPTAEL) and 677-763 (KLEN…SDEL). The short motif at 575 to 581 (SKTKRRR) is the Nuclear localization signal 2 element. The span at 580 to 590 (RREDSIQEDRG) shows a compositional bias: basic and acidic residues. The tract at residues 589 to 747 (RGSFVTTPTA…LFKASRRQVK (159 aa)) is PEST. The span at 692 to 710 (SSGYSSVSSGGSPTSSSSP) shows a compositional bias: low complexity. The segment covering 741-751 (ASRRQVKRKNQ) has biased composition (basic residues).

Belongs to the cyclin family. Cyclin AB subfamily. In terms of assembly, component of the SCF(CCNF) complex.

It localises to the nucleus. It is found in the cytoplasm. The protein resides in the perinuclear region. Its subcellular location is the cytoskeleton. The protein localises to the microtubule organizing center. It localises to the centrosome. It is found in the centriole. Substrate recognition component of the SCF(CCNF) E3 ubiquitin-protein ligase complex which mediates the ubiquitination and subsequent proteasomal degradation of target proteins. The SCF(CCNF) E3 ubiquitin-protein ligase complex is an integral component of the ubiquitin proteasome system (UPS) and links proteasome degradation to the cell cycle. Mediates the substrate recognition and the proteasomal degradation of various target proteins during G2 phase involved in the regulation of cell cycle progression and in the maintenance of genome stability. The polypeptide is Cyclin-F (ccnf) (Xenopus tropicalis (Western clawed frog)).